The primary structure comprises 704 residues: Elongation factor G (704 aa).

One can recognise a tr-type G domain in the interval 10–290 (NKVRNIGIMA…AVIDYLPSPL (281 aa)). GTP is bound by residues 19-26 (AHIDAGKT), 83-87 (DTPGH), and 137-140 (NKMD).

Belongs to the TRAFAC class translation factor GTPase superfamily. Classic translation factor GTPase family. EF-G/EF-2 subfamily.

The protein resides in the cytoplasm. Its function is as follows. Catalyzes the GTP-dependent ribosomal translocation step during translation elongation. During this step, the ribosome changes from the pre-translocational (PRE) to the post-translocational (POST) state as the newly formed A-site-bound peptidyl-tRNA and P-site-bound deacylated tRNA move to the P and E sites, respectively. Catalyzes the coordinated movement of the two tRNA molecules, the mRNA and conformational changes in the ribosome. This Clavibacter sepedonicus (Clavibacter michiganensis subsp. sepedonicus) protein is Elongation factor G.